The chain runs to 1358 residues: Tenascin-R (1358 aa).

A signal peptide spans 1–31 (MGIDGETVVLKNMLIGVNLILLGSMLKPSEC). The segment at 37-58 (TERAQRQTVEEEGGASSYNTSS) is disordered. An N-linked (GlcNAc...) asparagine glycan is attached at Asn-55. Positions 127–157 (CASSSQVLQELLSRIEMLEREVSLLRDQCNT) form a coiled coil. The O-linked (Xyl...) (chondroitin sulfate) serine glycan is linked to Ser-176. Asn-180 and Asn-198 each carry an N-linked (GlcNAc...) asparagine glycan. EGF-like domains follow at residues 188 to 199 (CICNEGWFGKNC), 219 to 230 (CICDSEYSGDDC), and 250 to 261 (CVCEEPYTGEDC). Ser-271 carries O-linked (Xyl...) (chondroitin sulfate) serine glycosylation. Residue Asn-278 is glycosylated (N-linked (GlcNAc...) asparagine). Positions 281-292 (CLCQEGYAGEDC) constitute an EGF-like 4 domain. 2 disulfide bridges follow: Cys-297–Cys-307 and Cys-314–Cys-323. The O-linked (Xyl...) (chondroitin sulfate) serine glycan is linked to Ser-302. An EGF-like 5 domain is found at 312–323 (CICEEGYQGPDC). Fibronectin type-III domains lie at 328-420 (PPED…TPQG), 421-505 (LQFK…TVID), 506-597 (GPTQ…IDAP), 598-687 (KNLR…TELD), 688-777 (SPRD…FRPI), 778-865 (SHLH…TGID), 866-955 (PPKN…AMDS), 956-1042 (PMDL…TLLD), and 1043-1131 (PPDN…GGRV). N-linked (GlcNAc...) asparagine glycans are attached at residues Asn-392, Asn-470, and Asn-581. Position 724 is a phosphoserine (Ser-724). Residues Asn-791, Asn-869, Asn-874, Asn-1036, Asn-1046, and Asn-1261 are each glycosylated (N-linked (GlcNAc...) asparagine). The region spanning 1129 to 1344 (GRVFSHPQDC…FVEMKMRPYI (216 aa)) is the Fibrinogen C-terminal domain.

Belongs to the tenascin family. In terms of assembly, interacts with BCAN and ACAN in a calcium-dependent manner. Interacts with SCN2B, PTPRZ1, and CSPG3. Forms oligomers. Isoforms 1 and 2 form respectively trimeric (tribrachion) and dimeric kink-armed rodlike structures, which are linked by disulfide bridges. Interacts with CNTN1, TNC and FN1. Contains N-linked oligosaccharides with a sulfated carbohydrate structures. Contains N-linked oligosaccharides, O-linked sialylated structures and O-linked chondroitin sulfate glycosaminoglycans. Brain-specific.

The protein localises to the secreted. Its subcellular location is the extracellular space. It is found in the extracellular matrix. Its function is as follows. Neural extracellular matrix (ECM) protein involved in interactions with different cells and matrix components. Theses interactions can influence cellular behavior by either evoking a stable adhesion and differentiation, or repulsion and inhibition of neurite growth. Binding to cell surface gangliosides inhibits RGD-dependent integrin-mediated cell adhesion and results in an inhibition of PTK2/FAK1 (FAK) phosphorylation and cell detachment. Binding to membrane surface sulfatides results in a oligodendrocyte adhesion and differentiation. Interaction with CNTN1 induces a repulsion of neurons and an inhibition of neurite outgrowth. Interacts with SCN2B may play a crucial role in clustering and regulation of activity of sodium channels at nodes of Ranvier. TNR-linked chondroitin sulfate glycosaminoglycans are involved in the interaction with FN1 and mediates inhibition of cell adhesion and neurite outgrowth. The highly regulated addition of sulfated carbohydrate structure may modulate the adhesive properties of TNR over the course of development and during synapse maintenance. The protein is Tenascin-R (Tnr) of Mus musculus (Mouse).